The chain runs to 395 residues: S-adenosylmethionine synthase (395 aa).

Position 16 (histidine 16) interacts with ATP. Mg(2+) is bound at residue aspartate 18. Glutamate 44 lines the K(+) pocket. L-methionine contacts are provided by glutamate 57 and glutamine 100. A flexible loop region spans residues 100–110 (QSPDIAQGVDR). ATP contacts are provided by residues 167–169 (DAK), 233–234 (RF), aspartate 242, 248–249 (RK), alanine 265, and lysine 269. Aspartate 242 contacts L-methionine. Lysine 273 is a binding site for L-methionine.

Belongs to the AdoMet synthase family. As to quaternary structure, homotetramer; dimer of dimers. Mg(2+) serves as cofactor. Requires K(+) as cofactor.

The protein localises to the cytoplasm. It carries out the reaction L-methionine + ATP + H2O = S-adenosyl-L-methionine + phosphate + diphosphate. The protein operates within amino-acid biosynthesis; S-adenosyl-L-methionine biosynthesis; S-adenosyl-L-methionine from L-methionine: step 1/1. In terms of biological role, catalyzes the formation of S-adenosylmethionine (AdoMet) from methionine and ATP. The overall synthetic reaction is composed of two sequential steps, AdoMet formation and the subsequent tripolyphosphate hydrolysis which occurs prior to release of AdoMet from the enzyme. The protein is S-adenosylmethionine synthase of Burkholderia cenocepacia (strain ATCC BAA-245 / DSM 16553 / LMG 16656 / NCTC 13227 / J2315 / CF5610) (Burkholderia cepacia (strain J2315)).